Here is a 250-residue protein sequence, read N- to C-terminus: MALAPSKVSTFSGFSPKPSVGGAQKNPTCSVSLSFLNEKLGSRNLRVCASTVPLTGVIFEPFEEVKKSELAVPTAPQVSLARQNYADECESAINEQINVEYNASYVYHSLFAYFDRDNVALKGFAKFFKESSEEEREHAEKLMKYQNTRGGRVVLHAIKNVPSEFEHVEKGDALYAMELALSLEKLVNEKLLNVHSVADRNNDPQMADFIESEFLSEQVESIKKISEYVAQLRRVGKGHGVWHFDQRLLD.

Residues 1 to 49 (MALAPSKVSTFSGFSPKPSVGGAQKNPTCSVSLSFLNEKLGSRNLRVCA) constitute a chloroplast transit peptide. Residues 50–82 (STVPLTGVIFEPFEEVKKSELAVPTAPQVSLAR) form an extension peptide (EP) region. One can recognise a Ferritin-like diiron domain in the interval 83–236 (QNYADECESA…EYVAQLRRVG (154 aa)). Fe cation contacts are provided by E100, E135, H138, E184, and Q218.

Belongs to the ferritin family. Oligomer of 24 subunits. There are two types of subunits: L (light) chain and H (heavy) chain. The major chain can be light or heavy, depending on the species and tissue type. The functional molecule forms a roughly spherical shell with a diameter of 12 nm and contains a central cavity into which the insoluble mineral iron core is deposited.

It localises to the plastid. Its subcellular location is the chloroplast. It carries out the reaction 4 Fe(2+) + O2 + 4 H(+) = 4 Fe(3+) + 2 H2O. In terms of biological role, stores iron in a soluble, non-toxic, readily available form. Important for iron homeostasis. Has ferroxidase activity. Iron is taken up in the ferrous form and deposited as ferric hydroxides after oxidation. The protein is Ferritin, chloroplastic of Malus baccata var. xiaojinensis (Apple).